Reading from the N-terminus, the 321-residue chain is Replication factor C small subunit (321 aa).

An ATP-binding site is contributed by Gly43–Thr50.

Belongs to the activator 1 small subunits family. RfcS subfamily. In terms of assembly, heteromultimer composed of small subunits (RfcS) and large subunits (RfcL).

Functionally, part of the RFC clamp loader complex which loads the PCNA sliding clamp onto DNA. This Methanosphaera stadtmanae (strain ATCC 43021 / DSM 3091 / JCM 11832 / MCB-3) protein is Replication factor C small subunit.